Here is a 254-residue protein sequence, read N- to C-terminus: ATP synthase subunit a (254 aa).

The propeptide at 1 to 6 (MAFLIH) is removed in mature form. 7 consecutive transmembrane segments (helical) span residues 32 to 52 (LTNL…LHIM), 83 to 103 (IGAA…FILI), 119 to 139 (SIMV…ILGL), 146 to 166 (FFSF…LVPI), 182 to 202 (LFAN…FLAP), 207 to 227 (TFII…IIGL), and 228 to 248 (EIAV…SYLK).

This sequence belongs to the ATPase A chain family. In terms of assembly, F-type ATPases have 2 components, CF(1) - the catalytic core - and CF(0) - the membrane proton channel. CF(1) has five subunits: alpha(3), beta(3), gamma(1), delta(1), epsilon(1). CF(0) has three main subunits: a, b and c.

The protein resides in the mitochondrion inner membrane. Mitochondrial membrane ATP synthase (F(1)F(0) ATP synthase or Complex V) produces ATP from ADP in the presence of a proton gradient across the membrane which is generated by electron transport complexes of the respiratory chain. F-type ATPases consist of two structural domains, F(1) - containing the extramembraneous catalytic core and F(0) - containing the membrane proton channel, linked together by a central stalk and a peripheral stalk. During catalysis, ATP synthesis in the catalytic domain of F(1) is coupled via a rotary mechanism of the central stalk subunits to proton translocation. Key component of the proton channel; it may play a direct role in the translocation of protons across the membrane. The chain is ATP synthase subunit a (ATP6) from Mycosarcoma maydis (Corn smut fungus).